We begin with the raw amino-acid sequence, 227 residues long: ATP-dependent dethiobiotin synthetase BioD (227 aa).

ATP is bound at residue 12-17 (DAGKTH). T16 provides a ligand contact to Mg(2+). K37 is an active-site residue. Position 41 (S41) interacts with substrate. ATP contacts are provided by residues D54, 116–119 (EGAG), 176–177 (NQ), and 205–207 (PYS). D54 and E116 together coordinate Mg(2+).

It belongs to the dethiobiotin synthetase family. In terms of assembly, homodimer. The cofactor is Mg(2+).

It localises to the cytoplasm. The catalysed reaction is (7R,8S)-7,8-diammoniononanoate + CO2 + ATP = (4R,5S)-dethiobiotin + ADP + phosphate + 3 H(+). It participates in cofactor biosynthesis; biotin biosynthesis; biotin from 7,8-diaminononanoate: step 1/2. In terms of biological role, catalyzes a mechanistically unusual reaction, the ATP-dependent insertion of CO2 between the N7 and N8 nitrogen atoms of 7,8-diaminopelargonic acid (DAPA, also called 7,8-diammoniononanoate) to form a ureido ring. The protein is ATP-dependent dethiobiotin synthetase BioD of Pseudoalteromonas translucida (strain TAC 125).